The primary structure comprises 358 residues: tRNA pseudouridine synthase B (358 aa).

Positions 1–50 (MTTPDAAIDSKISDSNGADKNKSAADDNAFNAPGRKRHHNNQPRRDKRDV) are disordered. The Nucleophile role is filled by aspartate 87.

The protein belongs to the pseudouridine synthase TruB family. Type 1 subfamily.

It catalyses the reaction uridine(55) in tRNA = pseudouridine(55) in tRNA. Responsible for synthesis of pseudouridine from uracil-55 in the psi GC loop of transfer RNAs. This Nitrobacter winogradskyi (strain ATCC 25391 / DSM 10237 / CIP 104748 / NCIMB 11846 / Nb-255) protein is tRNA pseudouridine synthase B.